Here is a 315-residue protein sequence, read N- to C-terminus: HTH-type transcriptional regulator TreR (315 aa).

An HTH lacI-type domain is found at 5 to 59; it reads LTIKDIARLSGVGKSTVSRVLNNESGVSERTRERVEAVMNQHGFSPSRSARAMRG. The segment at residues 7–26 is a DNA-binding region (H-T-H motif); that stretch reads IKDIARLSGVGKSTVSRVLN. Alpha,alpha-trehalose 6-phosphate contacts are provided by residues 71–77, Gly126, Arg147, 187–190, Arg194, Thr242, and Tyr284; these read RLDSLSE and DITT.

Homodimer.

Functionally, repressor of the treBC operon. It is able to bind trehalose-6-phosphate. The chain is HTH-type transcriptional regulator TreR (treR) from Salmonella typhimurium (strain LT2 / SGSC1412 / ATCC 700720).